The following is a 210-amino-acid chain: Redox-sensing transcriptional repressor Rex (210 aa).

The H-T-H motif DNA-binding region spans 16–55 (VYSRHLTDVDRKGIVTISSGDIAEGVGVSPAQVRKDLAYF). 90–95 (GMGNLG) serves as a coordination point for NAD(+).

It belongs to the transcriptional regulatory Rex family. As to quaternary structure, homodimer.

It is found in the cytoplasm. Functionally, modulates transcription in response to changes in cellular NADH/NAD(+) redox state. In Desulfitobacterium hafniense (strain DSM 10664 / DCB-2), this protein is Redox-sensing transcriptional repressor Rex.